The following is a 308-amino-acid chain: Phosphoribosylaminoimidazole-succinocarboxamide synthase (308 aa).

It belongs to the SAICAR synthetase family.

It catalyses the reaction 5-amino-1-(5-phospho-D-ribosyl)imidazole-4-carboxylate + L-aspartate + ATP = (2S)-2-[5-amino-1-(5-phospho-beta-D-ribosyl)imidazole-4-carboxamido]succinate + ADP + phosphate + 2 H(+). It participates in purine metabolism; IMP biosynthesis via de novo pathway; 5-amino-1-(5-phospho-D-ribosyl)imidazole-4-carboxamide from 5-amino-1-(5-phospho-D-ribosyl)imidazole-4-carboxylate: step 1/2. The polypeptide is Phosphoribosylaminoimidazole-succinocarboxamide synthase (Xanthomonas oryzae pv. oryzae (strain PXO99A)).